Reading from the N-terminus, the 130-residue chain is Small ribosomal subunit protein uS11 (130 aa).

This sequence belongs to the universal ribosomal protein uS11 family. Part of the 30S ribosomal subunit. Interacts with proteins S7 and S18. Binds to IF-3.

Functionally, located on the platform of the 30S subunit, it bridges several disparate RNA helices of the 16S rRNA. Forms part of the Shine-Dalgarno cleft in the 70S ribosome. In Alkalilimnicola ehrlichii (strain ATCC BAA-1101 / DSM 17681 / MLHE-1), this protein is Small ribosomal subunit protein uS11.